Reading from the N-terminus, the 170-residue chain is Probable chemoreceptor glutamine deamidase CheD (170 aa).

Belongs to the CheD family.

The catalysed reaction is L-glutaminyl-[protein] + H2O = L-glutamyl-[protein] + NH4(+). Probably deamidates glutamine residues to glutamate on methyl-accepting chemotaxis receptors (MCPs), playing an important role in chemotaxis. In Maridesulfovibrio salexigens (strain ATCC 14822 / DSM 2638 / NCIMB 8403 / VKM B-1763) (Desulfovibrio salexigens), this protein is Probable chemoreceptor glutamine deamidase CheD.